Reading from the N-terminus, the 726-residue chain is WD repeat-containing and planar cell polarity effector protein fritz homolog (726 aa).

WD repeat units follow at residues 305 to 343 (LRSK…TLLA) and 344 to 383 (QAEL…INIQ). Over residues 642 to 660 (SSGSTPKHTIQQKIPNGPS) the composition is skewed to polar residues. A disordered region spans residues 642 to 717 (SSGSTPKHTI…RRQDTEDVGS (76 aa)). Over residues 672–685 (MEETEEEEEEEEEA) the composition is skewed to acidic residues. The segment covering 701–712 (GELREDHRRQDT) has biased composition (basic and acidic residues).

Belongs to the WD repeat fritz family. In terms of assembly, component of the CPLANE (ciliogenesis and planar polarity effectors) complex, composed of INTU, FUZ and WDPCP. Interacts with CPLANE1.

Its subcellular location is the cell membrane. It localises to the cytoplasm. The protein resides in the cytoskeleton. It is found in the cilium axoneme. The protein localises to the cilium basal body. Probable effector of the planar cell polarity signaling pathway which regulates the septin cytoskeleton in both ciliogenesis and collective cell movements. Together with FUZ and WDPCP proposed to function as core component of the CPLANE (ciliogenesis and planar polarity effectors) complex involved in the recruitment of peripheral IFT-A proteins to basal bodies. Binds phosphatidylinositol 3-phosphate with highest affinity, followed by phosphatidylinositol 4-phosphate and phosphatidylinositol 5-phosphate. The sequence is that of WD repeat-containing and planar cell polarity effector protein fritz homolog (Wdpcp) from Rattus norvegicus (Rat).